The sequence spans 281 residues: Pantothenate synthetase (281 aa).

Met31–His38 contributes to the ATP binding site. The active-site Proton donor is His38. Gln62 is a binding site for (R)-pantoate. Gln62 provides a ligand contact to beta-alanine. Gly150–Asp153 contributes to the ATP binding site. Gln156 is a binding site for (R)-pantoate. ATP is bound by residues Val179 and Met187 to Arg190.

The protein belongs to the pantothenate synthetase family. As to quaternary structure, homodimer.

Its subcellular location is the cytoplasm. It catalyses the reaction (R)-pantoate + beta-alanine + ATP = (R)-pantothenate + AMP + diphosphate + H(+). It participates in cofactor biosynthesis; (R)-pantothenate biosynthesis; (R)-pantothenate from (R)-pantoate and beta-alanine: step 1/1. Functionally, catalyzes the condensation of pantoate with beta-alanine in an ATP-dependent reaction via a pantoyl-adenylate intermediate. The polypeptide is Pantothenate synthetase (Xylella fastidiosa (strain 9a5c)).